The sequence spans 119 residues: MFKKNDRSQSRTRRHMRVRKKIFGTAERPRLSVYRSEKHIYAQLIDDVEGKTLVAASSSEKGFDSVGSNKEGAKLVGKMIAEKALEKGLKKVVFDRGGFIYHGRIKELAEGAREAGLDF.

It belongs to the universal ribosomal protein uL18 family. Part of the 50S ribosomal subunit; part of the 5S rRNA/L5/L18/L25 subcomplex. Contacts the 5S and 23S rRNAs.

This is one of the proteins that bind and probably mediate the attachment of the 5S RNA into the large ribosomal subunit, where it forms part of the central protuberance. The protein is Large ribosomal subunit protein uL18 of Clostridium botulinum (strain Langeland / NCTC 10281 / Type F).